The primary structure comprises 632 residues: 1-deoxy-D-xylulose-5-phosphate synthase (632 aa).

Thiamine diphosphate-binding positions include H77 and 118-120; that span reads GHA. D149 serves as a coordination point for Mg(2+). Thiamine diphosphate contacts are provided by residues 150–151, N178, F287, and E372; that span reads GS. A Mg(2+)-binding site is contributed by N178.

Belongs to the transketolase family. DXPS subfamily. In terms of assembly, homodimer. It depends on Mg(2+) as a cofactor. Thiamine diphosphate serves as cofactor.

It catalyses the reaction D-glyceraldehyde 3-phosphate + pyruvate + H(+) = 1-deoxy-D-xylulose 5-phosphate + CO2. The protein operates within metabolic intermediate biosynthesis; 1-deoxy-D-xylulose 5-phosphate biosynthesis; 1-deoxy-D-xylulose 5-phosphate from D-glyceraldehyde 3-phosphate and pyruvate: step 1/1. Functionally, catalyzes the acyloin condensation reaction between C atoms 2 and 3 of pyruvate and glyceraldehyde 3-phosphate to yield 1-deoxy-D-xylulose-5-phosphate (DXP). The polypeptide is 1-deoxy-D-xylulose-5-phosphate synthase (Chlorobium luteolum (strain DSM 273 / BCRC 81028 / 2530) (Pelodictyon luteolum)).